The chain runs to 396 residues: Probable splicing factor YJU2B (396 aa).

Residues 1–26 (MGERKGVNKYYPPDFNPEKHGSLNRY) form a disordered region. Ser-40 is modified (phosphoserine). A coiled-coil region spans residues 182–214 (LNSMLRRRFREKKKAIQEEEERDQALQAKASLT). The disordered stretch occupies residues 295 to 396 (IVRRRSRDVP…VADYSDSESE (102 aa)). Ser-306 is modified (phosphoserine). A compositionally biased stretch (basic and acidic residues) spans 315–327 (KSGEPRVPEEAAQ). Polar residues predominate over residues 340-350 (TTETPKCSSPR). Ser-362 bears the Phosphoserine mark.

The protein belongs to the CWC16 family.

The protein localises to the nucleus. In terms of biological role, may be involved in mRNA splicing. This chain is Probable splicing factor YJU2B, found in Homo sapiens (Human).